Here is a 608-residue protein sequence, read N- to C-terminus: Extracellular metalloproteinase 5 (608 aa).

A signal peptide spans 1–20 (MHGLLLAAAGLLSLPLHVIA). A propeptide spanning residues 21-244 (HPQPSTNLAG…VHNVVDYVSH (224 aa)) is cleaved from the precursor. N-linked (GlcNAc...) asparagine glycosylation is present at N285. Zn(2+) is bound at residue H427. Residue E428 is part of the active site. H431 is a binding site for Zn(2+). N591 carries N-linked (GlcNAc...) asparagine glycosylation.

The protein belongs to the peptidase M36 family. The cofactor is Zn(2+).

It localises to the secreted. Functionally, secreted metalloproteinase probably acting as a virulence factor. The sequence is that of Extracellular metalloproteinase 5 (MEP5) from Trichophyton tonsurans (Scalp ringworm fungus).